The chain runs to 337 residues: Glycerol-3-phosphate dehydrogenase [NAD(P)+] (337 aa).

Residues S17, Y18, H38, and K112 each contribute to the NADPH site. Sn-glycerol 3-phosphate-binding residues include K112, G141, and T143. NADPH is bound at residue A145. The sn-glycerol 3-phosphate site is built by K197, D250, S260, R261, and N262. The Proton acceptor role is filled by K197. An NADPH-binding site is contributed by R261. V285 and E287 together coordinate NADPH.

Belongs to the NAD-dependent glycerol-3-phosphate dehydrogenase family.

The protein localises to the cytoplasm. It catalyses the reaction sn-glycerol 3-phosphate + NAD(+) = dihydroxyacetone phosphate + NADH + H(+). It carries out the reaction sn-glycerol 3-phosphate + NADP(+) = dihydroxyacetone phosphate + NADPH + H(+). It functions in the pathway membrane lipid metabolism; glycerophospholipid metabolism. In terms of biological role, catalyzes the reduction of the glycolytic intermediate dihydroxyacetone phosphate (DHAP) to sn-glycerol 3-phosphate (G3P), the key precursor for phospholipid synthesis. The chain is Glycerol-3-phosphate dehydrogenase [NAD(P)+] from Pasteurella multocida (strain Pm70).